The following is a 66-amino-acid chain: Small ribosomal subunit protein bS21 (66 aa).

It belongs to the bacterial ribosomal protein bS21 family.

This is Small ribosomal subunit protein bS21 from Maridesulfovibrio salexigens (strain ATCC 14822 / DSM 2638 / NCIMB 8403 / VKM B-1763) (Desulfovibrio salexigens).